The chain runs to 656 residues: Pheromone-processing carboxypeptidase KEX1 (656 aa).

A signal peptide spans 1–17 (MFFHAILVLIQVALALG). The Lumenal portion of the chain corresponds to 18-536 (ASPRAGSSER…DNNTSHKIER (519 aa)). Residues Asn-61 and Asn-118 are each glycosylated (N-linked (GlcNAc...) asparagine). Active-site residues include Ser-180 and Asp-388. Residues Asn-434 and Asn-442 are each glycosylated (N-linked (GlcNAc...) asparagine). Residue His-445 is part of the active site. The helical transmembrane segment at 537-557 (AIQLLVIIVLLWGIYALYSSY) threads the bilayer. Residues 558 to 656 (KSRPSSIIKS…SRNEPSSNQK (99 aa)) are Cytoplasmic-facing. The tract at residues 626-656 (MSSASPIDDFVVVSDDEEEEPSRNEPSSNQK) is disordered.

The protein belongs to the peptidase S10 family.

The protein resides in the golgi apparatus. It localises to the trans-Golgi network membrane. The catalysed reaction is Preferential release of a C-terminal arginine or lysine residue.. Its function is as follows. Protease with a carboxypeptidase B-like function involved in the C-terminal processing of the lysine and arginine residues from protein precursors. Promotes cell fusion and is involved in the programmed cell death. This is Pheromone-processing carboxypeptidase KEX1 (KEX1) from Meyerozyma guilliermondii (strain ATCC 6260 / CBS 566 / DSM 6381 / JCM 1539 / NBRC 10279 / NRRL Y-324) (Yeast).